A 153-amino-acid chain; its full sequence is Aspartate carbamoyltransferase regulatory chain (153 aa).

The Zn(2+) site is built by Cys-109, Cys-114, Cys-138, and Cys-141.

This sequence belongs to the PyrI family. Contains catalytic and regulatory chains. Zn(2+) serves as cofactor.

Involved in allosteric regulation of aspartate carbamoyltransferase. In Vibrio parahaemolyticus serotype O3:K6 (strain RIMD 2210633), this protein is Aspartate carbamoyltransferase regulatory chain.